The primary structure comprises 471 residues: Reticulon-2 (471 aa).

Disordered regions lie at residues 1–137, 153–181, and 205–234; these read MGQV…ERPL, SAGS…ASEA, and QLSP…DDEP. The span at 14–25 shows a compositional bias: low complexity; the sequence is APSTASSTPDST. Basic and acidic residues predominate over residues 32–43; that stretch reads SDFRELHTAREF. Residue serine 44 is modified to Phosphoserine. 2 stretches are compositionally biased toward polar residues: residues 100 to 118 and 159 to 168; these read PQQS…LSQS and DSATSSSTPL. Residues 169–181 are compositionally biased toward acidic residues; sequence ENEEPDGLEASEA. The span at 205 to 229 shows a compositional bias: polar residues; sequence QLSPSSGTPQAHTPSPQRSQDSNSG. Residues serine 226 and serine 228 each carry the phosphoserine modification. In terms of domain architecture, Reticulon spans 272-471; sequence VADLLYWKDT…SVSGSKAKAE (200 aa). 2 consecutive transmembrane segments (helical) span residues 295–315 and 390–410; these read LLCL…LLGL and LLFY…LVIL.

Interacts with SPAST. Interacts with BACE1. Interacts (via first transmembrane domain) with ARL6IP5/GTRAP3-18. Interacts (via N-terminus) with SLC1A1/EAAC1; the interaction promotes cell surface expression of SLC1A1. In terms of tissue distribution, detected in skeletal and cardiac muscle (at protein level). Expressed predominantly in neural and muscular tissues.

It is found in the endoplasmic reticulum membrane. Its subcellular location is the sarcoplasmic reticulum membrane. The protein localises to the cell membrane. It localises to the sarcolemma. The protein resides in the T-tubule. It is found in the cytoplasm. Its subcellular location is the myofibril. The protein localises to the sarcomere. It localises to the z line. The protein resides in the cytoskeleton. Functionally, inhibits amyloid precursor protein processing, probably by blocking BACE1 activity. Enhances trafficking of the glutamate transporter SLC1A1/EAAC1 from the endoplasmic reticulum to the cell surface. Plays a role in the translocation of SLC2A4/GLUT4 from intracellular membranes to the cell membrane which facilitates the uptake of glucose into the cell. The chain is Reticulon-2 from Mus musculus (Mouse).